The primary structure comprises 70 residues: MVDCQKEACNLQSCIQRNQYNQGNCEKFVNDLLLCCKRWYDKNSLTGNEAPHTCPELKPLLRQLSSRNLT.

The 43-residue stretch at 1–43 (MVDCQKEACNLQSCIQRNQYNQGNCEKFVNDLLLCCKRWYDKN) folds into the CHCH domain. 2 consecutive short sequence motifs (cx9C motif) follow at residues 4-14 (CQKEACNLQSC) and 25-35 (CEKFVNDLLLC). Cystine bridges form between cysteine 4-cysteine 35 and cysteine 14-cysteine 25.

The protein belongs to the CMC4 family.

The protein resides in the mitochondrion intermembrane space. The chain is Cx9C motif-containing protein 4, mitochondrial (cmc4) from Schizosaccharomyces pombe (strain 972 / ATCC 24843) (Fission yeast).